Consider the following 251-residue polypeptide: Triosephosphate isomerase (251 aa).

9–11 (NWK) serves as a coordination point for substrate. Residue His95 is the Electrophile of the active site. The active-site Proton acceptor is Glu167. Substrate-binding positions include Gly173, Ser213, and 234–235 (GG). Phosphoserine is present on Ser213.

Belongs to the triosephosphate isomerase family. In terms of assembly, homodimer.

It is found in the cytoplasm. It carries out the reaction D-glyceraldehyde 3-phosphate = dihydroxyacetone phosphate. The protein operates within carbohydrate biosynthesis; gluconeogenesis. It participates in carbohydrate degradation; glycolysis; D-glyceraldehyde 3-phosphate from glycerone phosphate: step 1/1. Functionally, involved in the gluconeogenesis. Catalyzes stereospecifically the conversion of dihydroxyacetone phosphate (DHAP) to D-glyceraldehyde-3-phosphate (G3P). The sequence is that of Triosephosphate isomerase from Bacillus cereus (strain B4264).